The primary structure comprises 47 residues: Delta-ctenitoxin-Asp2e (47 aa).

Cystine bridges form between cysteine 3-cysteine 17, cysteine 10-cysteine 23, cysteine 14-cysteine 46, cysteine 16-cysteine 31, and cysteine 25-cysteine 29.

As to expression, expressed by the venom gland.

It is found in the secreted. Inhibits the inactivation of voltage-gated sodium channels (Nav). In Ancylometes sp. (South American fishing spider), this protein is Delta-ctenitoxin-Asp2e.